A 229-amino-acid polypeptide reads, in one-letter code: Triosephosphate isomerase (229 aa).

Residue 6 to 8 coordinates substrate; the sequence is NLK. His-85 functions as the Electrophile in the catalytic mechanism. The Proton acceptor role is filled by Glu-152. Gly-158 and Ser-188 together coordinate substrate.

Belongs to the triosephosphate isomerase family. In terms of assembly, homodimer.

It localises to the cytoplasm. It catalyses the reaction D-glyceraldehyde 3-phosphate = dihydroxyacetone phosphate. It participates in carbohydrate biosynthesis; gluconeogenesis. Its pathway is carbohydrate degradation; glycolysis; D-glyceraldehyde 3-phosphate from glycerone phosphate: step 1/1. Functionally, involved in the gluconeogenesis. Catalyzes stereospecifically the conversion of dihydroxyacetone phosphate (DHAP) to D-glyceraldehyde-3-phosphate (G3P). The protein is Triosephosphate isomerase of Campylobacter curvus (strain 525.92).